The sequence spans 127 residues: uncharacterized protein (127 aa).

2 disordered regions span residues 1–22 (MLPA…KMKG) and 53–106 (LVGK…PGPK). Positions 76–95 (PNGEAHAEQARRKISVEEKQ) are enriched in basic and acidic residues.

Its subcellular location is the mitochondrion. This is an uncharacterized protein from Arabidopsis thaliana (Mouse-ear cress).